A 614-amino-acid chain; its full sequence is Zinc finger and SCAN domain-containing protein 2 (614 aa).

Disordered regions lie at residues 1–26 (MMAADIPRVTTPLSSLVQVPQEEDRQ) and 43–76 (EAVLQEDGPESEPFPQSAGKGGPQEEVTRGPQGA). The 74-residue stretch at 59-132 (SAGKGGPQEE…ALVEDLTQTL (74 aa)) folds into the SCAN box domain. 14 C2H2-type zinc fingers span residues 222 to 244 (YECPQCGKTFSRKSHLITHERTH), 250 to 272 (YKCDECGKSFSDGSNFSRHQTTH), 278 to 300 (YKCRDCGKSFSRSANLITHQRIH), 306 to 328 (FQCAECGKSFSRSPNLIAHQRTH), 334 to 356 (YSCPECGKSFGNRSSLNTHQGIH), 362 to 384 (YECKECGESFSYNSNLIRHQRIH), 390 to 412 (YKCTDCGQRFSQSSALITHRRTH), 418 to 440 (YQCSECGKSFSRSSNLATHRRTH), 446 to 468 (YKCGVCGKSFSQSSSLIAHQGMH), 474 to 496 (YECLTCGESFSWSSNLLKHQRIH), 502 to 524 (YKCSECGKCFSQRSQLVVHQRTH), 530 to 552 (YKCLMCGKSFSRGSILVMHQRAH), 558 to 580 (YRCPECGKGFSWNSVLIIHQRIH), and 586 to 608 (YKCPECGKGFSNSSNFITHQRTH).

Belongs to the krueppel C2H2-type zinc-finger protein family.

It is found in the nucleus. In terms of biological role, may be involved in transcriptional regulation during the post-meiotic stages of spermatogenesis. The sequence is that of Zinc finger and SCAN domain-containing protein 2 (ZSCAN2) from Homo sapiens (Human).